A 177-amino-acid polypeptide reads, in one-letter code: MNTPVGVAEIVLGPGEVVFQTRPTRLRTLLGSCVAITFWHPWRRIGGMCHFMLPGRIRRHQPLDGRYADEAMEILIRHALANGTLPEEYQVKLFGGGEMFPAHRHDPHMQNVADSNVHAALALAEQHRLKLMAQDLGSTGHRNIIFDLWNGNVWVRHQPMEAIEKDAKQKNQRIAGR.

Belongs to the CheD family.

It catalyses the reaction L-glutaminyl-[protein] + H2O = L-glutamyl-[protein] + NH4(+). Probably deamidates glutamine residues to glutamate on methyl-accepting chemotaxis receptors (MCPs), playing an important role in chemotaxis. This is Probable chemoreceptor glutamine deamidase CheD from Pseudomonas savastanoi pv. phaseolicola (strain 1448A / Race 6) (Pseudomonas syringae pv. phaseolicola (strain 1448A / Race 6)).